The sequence spans 178 residues: Beta-lactoglobulin-1A/1C (178 aa).

Positions 1 to 18 are cleaved as a signal peptide; the sequence is MRCLLLTLGLALLCGVQA. 2 disulfides stabilise this stretch: Cys-84–Cys-176 and Cys-124–Cys-137.

Belongs to the calycin superfamily. Lipocalin family. As to quaternary structure, under physiological conditions beta-lactoglobulin exists as an equilibrium mixture of monomeric and dimeric forms.

It is found in the secreted. In terms of biological role, lactoglobulin is the primary component of whey, it binds retinol and is probably involved in the transport of that molecule. The sequence is that of Beta-lactoglobulin-1A/1C from Sus scrofa (Pig).